A 122-amino-acid polypeptide reads, in one-letter code: Protein translocase subunit SecE (122 aa).

3 helical membrane-spanning segments follow: residues 14–34, 38–58, and 93–113; these read LLKW…NQYF, PILY…FLAL, and LIVV…DSLL.

This sequence belongs to the SecE/SEC61-gamma family. In terms of assembly, component of the Sec protein translocase complex. Heterotrimer consisting of SecY, SecE and SecG subunits. The heterotrimers can form oligomers, although 1 heterotrimer is thought to be able to translocate proteins. Interacts with the ribosome. Interacts with SecDF, and other proteins may be involved. Interacts with SecA.

The protein localises to the cell inner membrane. Essential subunit of the Sec protein translocation channel SecYEG. Clamps together the 2 halves of SecY. May contact the channel plug during translocation. This is Protein translocase subunit SecE from Pseudomonas aeruginosa (strain ATCC 15692 / DSM 22644 / CIP 104116 / JCM 14847 / LMG 12228 / 1C / PRS 101 / PAO1).